A 534-amino-acid polypeptide reads, in one-letter code: Phosphoenolpyruvate carboxykinase (ATP) (534 aa).

Positions 59, 200, and 206 each coordinate substrate. Residues lysine 206, histidine 225, and glycine 242 to threonine 250 each bind ATP. Mn(2+) contacts are provided by lysine 206 and histidine 225. Aspartate 263 is a binding site for Mn(2+). ATP is bound by residues glutamate 291, arginine 327, arginine 443 to isoleucine 444, and threonine 449. Substrate is bound at residue arginine 327.

The protein belongs to the phosphoenolpyruvate carboxykinase (ATP) family. Mn(2+) is required as a cofactor.

The protein localises to the cytoplasm. The enzyme catalyses oxaloacetate + ATP = phosphoenolpyruvate + ADP + CO2. The protein operates within carbohydrate biosynthesis; gluconeogenesis. Involved in the gluconeogenesis. Catalyzes the conversion of oxaloacetate (OAA) to phosphoenolpyruvate (PEP) through direct phosphoryl transfer between the nucleoside triphosphate and OAA. The polypeptide is Phosphoenolpyruvate carboxykinase (ATP) (Agathobacter rectalis (strain ATCC 33656 / DSM 3377 / JCM 17463 / KCTC 5835 / VPI 0990) (Eubacterium rectale)).